We begin with the raw amino-acid sequence, 473 residues long: H(+)/Cl(-) exchange transporter ClcA (473 aa).

Topologically, residues 1 to 32 (MKTDNSTFLAQQIVRLRRRDQIRRLMQRDKTP) are cytoplasmic. The chain crosses the membrane as a helical span at residues 33-69 (LAILFMAAVVGTLTGLVGVAFEKAVSWVQNMRIGALV). The Periplasmic portion of the chain corresponds to 70–76 (QVADHAF). Residues 77 to 100 (LLWPLAFILSALLAMVGYFLVRKF) form a helical membrane-spanning segment. A Selectivity filter part_1 motif is present at residues 106-110 (GSGIP). Residue S107 participates in chloride binding. Positions 109–116 (IPEIEGAL) form an intramembrane region, helical. Residues 117–123 (EELRPVR) are Cytoplasmic-facing. Helical transmembrane passes span 124 to 141 (WWRV…TLGA) and 148 to 166 (EGPT…LDVF). The Selectivity filter part_2 motif lies at 146–150 (GREGP). The Cytoplasmic segment spans residues 167 to 176 (RMRSAEARHT). 2 consecutive intramembrane regions (helical) follow at residues 177 to 189 (LLAT…LSAA) and 193 to 201 (PLAGILFII). The Cytoplasmic portion of the chain corresponds to 202 to 214 (EEMRPQFRYNLIS). A helical transmembrane segment spans residues 215 to 232 (IKAVFTGVIMSSIVFRIF). Over 233-252 (NGEAPIIEVGKLSDAPVNTL) the chain is Periplasmic. The chain crosses the membrane as a helical span at residues 253-281 (WLYLILGIIFGCVGPVFNSLVLRTQDMFQ). Residues 282–287 (RFHGGE) are Cytoplasmic-facing. The chain crosses the membrane as a helical span at residues 288–309 (IKKWVLMGGAIGGLCGILGLIE). The Periplasmic portion of the chain corresponds to 310-329 (PEAAGGGFNLIPIAAAGNFS). The next 2 helical transmembrane spans lie at 330–349 (VGLL…LCFS) and 355–376 (GIFA…MAAA). Residues 355–359 (GIFAP) carry the Selectivity filter part_3 motif. Residues I356 and F357 each contribute to the chloride site. Residues 377-386 (VLFPQYHLEA) are Periplasmic-facing. An intramembrane region (helical) is located at residues 387-401 (GTFAIAGMGALMAAS). Positions 402–404 (VRA) form an intramembrane region, note=Loop between two helices. The helical intramembrane region spans 405 to 416 (PLTGIVLVLEMT). Positions 417 to 421 (DNYQL) form an intramembrane region, note=Loop between two helices. Residues 422-438 (ILPMIITCLGATLLAQF) form a helical membrane-spanning segment. Residues 439–473 (LGGKPLYSTILARTLAKQDAEQAAKNQNAPAGENT) lie on the Cytoplasmic side of the membrane. Y445 contributes to the chloride binding site.

It belongs to the chloride channel (TC 2.A.49) family. ClcA subfamily. In terms of assembly, homodimer.

The protein resides in the cell inner membrane. It carries out the reaction 2 chloride(in) + H(+)(out) = 2 chloride(out) + H(+)(in). Proton-coupled chloride transporter. Functions as antiport system and exchanges two chloride ions for 1 proton. Probably acts as an electrical shunt for an outwardly-directed proton pump that is linked to amino acid decarboxylation, as part of the extreme acid resistance (XAR) response. The protein is H(+)/Cl(-) exchange transporter ClcA of Salmonella schwarzengrund (strain CVM19633).